The sequence spans 1683 residues: Phospholipase D1 (1683 aa).

4 disordered regions span residues 1-150 (MSNV…AYTQ), 173-198 (LKSSVNSPTPAGSGHRHNQHQHQQVN), 259-289 (ILDITNSNHNHRGNNNNNTGENSDRRPSIPR), and 384-416 (VMEKKAENKPSSAASAPHTSENNNNDNGSNITS). Serine 2 is subject to N-acetylserine. 2 positions are modified to phosphoserine: serine 8 and serine 30. Basic and acidic residues-rich tracts occupy residues 20–34 (SVTEEVDRVNSRPDE), 63–82 (NGKEAERKHALPKSFVDRNL), and 90–112 (SLDHIMHSNEHDPRRGSDEENMH). The span at 116-125 (NNLHSSNNNV) shows a compositional bias: low complexity. Over residues 141–150 (RRSSSVAYTQ) the composition is skewed to polar residues. Phosphoserine is present on serine 145. The span at 263 to 279 (TNSNHNHRGNNNNNTGE) shows a compositional bias: low complexity. Residues 291–487 (SSIISISSNV…EFYELSPLGN (197 aa)) enclose the PX domain. A compositionally biased stretch (polar residues) spans 392–404 (KPSSAASAPHTSE). Residues 405–416 (NNNNDNGSNITS) show a composition bias toward low complexity. A PH domain is found at 496–664 (QGKQGYLVIR…SSIIKMSTST (169 aa)). PLD phosphodiesterase domains follow at residues 791–818 (YFWAHHEKFVVIDETFAFIGGTDLCYGR) and 1091–1118 (EQLYVHAKILIADDRRCIIGSANINERS). Residues histidine 796, lysine 798, aspartate 803, histidine 1096, lysine 1098, and aspartate 1103 contribute to the active site. The segment at 1430-1465 (KDMRRHLSSSTESTRNGSNSLPLNEKSNEGESTNVD) is disordered. Residues 1437–1451 (SSSTESTRNGSNSLP) show a composition bias toward polar residues. Position 1461 is a phosphoserine (serine 1461). A Phosphothreonine modification is found at threonine 1462.

This sequence belongs to the phospholipase D family. Interacts with SRF1.

The catalysed reaction is a 1,2-diacyl-sn-glycero-3-phosphocholine + H2O = a 1,2-diacyl-sn-glycero-3-phosphate + choline + H(+). Its activity is regulated as follows. Activity is dependent of phosphatidylinositol 4,5-bisphosphate and the regulator SRF1. Inhibited by magnesium. Its function is as follows. Required for meiosis and spore formation. Seems to be involved in the coordinate induction of late meiotic events. PLD activity is induced under sporulation conditions and seems to be necessary to complete the meiotic cycle, but not for vegetative cell growth. The chain is Phospholipase D1 (SPO14) from Saccharomyces cerevisiae (strain ATCC 204508 / S288c) (Baker's yeast).